The sequence spans 223 residues: Transcription factor bHLH75 (223 aa).

The segment at 58-100 is disordered; that stretch reads FPNLLHGNTRRKGNKEESGSKRRRKRSEEEEAMNGDETQKPKD. The bHLH domain occupies 110 to 160; the sequence is QATDSHSLAERVRREKINERLKCLQDLVPGCYKAMGMAVMLDVIIDYVRSL.

In terms of assembly, homodimer. In terms of tissue distribution, expressed in leaves, stems, and flowers.

The protein localises to the nucleus. In Arabidopsis thaliana (Mouse-ear cress), this protein is Transcription factor bHLH75 (BHLH75).